The following is a 579-amino-acid chain: Chromosomal replication initiator protein DnaA (579 aa).

A domain I, interacts with DnaA modulators region spans residues methionine 1–threonine 71. The interval threonine 71–serine 242 is domain II. Disordered stretches follow at residues alanine 131–histidine 196 and glutamate 212–glutamate 240. A compositionally biased stretch (low complexity) spans serine 171–alanine 183. Residues arginine 243–serine 459 form a domain III, AAA+ region region. ATP is bound by residues glycine 287, glycine 289, lysine 290, and threonine 291. A domain IV, binds dsDNA region spans residues asparagine 460–glycine 579.

It belongs to the DnaA family. In terms of assembly, oligomerizes as a right-handed, spiral filament on DNA at oriC.

It localises to the cytoplasm. Plays an essential role in the initiation and regulation of chromosomal replication. ATP-DnaA binds to the origin of replication (oriC) to initiate formation of the DNA replication initiation complex once per cell cycle. Binds the DnaA box (a 9 base pair repeat at the origin) and separates the double-stranded (ds)DNA. Forms a right-handed helical filament on oriC DNA; dsDNA binds to the exterior of the filament while single-stranded (ss)DNA is stabiized in the filament's interior. The ATP-DnaA-oriC complex binds and stabilizes one strand of the AT-rich DNA unwinding element (DUE), permitting loading of DNA polymerase. After initiation quickly degrades to an ADP-DnaA complex that is not apt for DNA replication. Binds acidic phospholipids. The chain is Chromosomal replication initiator protein DnaA from Cupriavidus metallidurans (strain ATCC 43123 / DSM 2839 / NBRC 102507 / CH34) (Ralstonia metallidurans).